The chain runs to 707 residues: Ferric reduction oxidase 5 (707 aa).

The Cytoplasmic portion of the chain corresponds to 1-9 (MGNMRSLVK). A helical membrane pass occupies residues 10-29 (MLMVVLFLGWIFVWIMISTN). The Extracellular portion of the chain corresponds to 30-54 (RFQNIWTPKLAKYLKTTYFGPQGMN). A helical membrane pass occupies residues 55-73 (LVLLTVPMMFIAVLSCVYL). Over 74-106 (HTQKQPSQTQSLYKCREWKVKGRMGRVMMVMNP) the chain is Cytoplasmic. The chain crosses the membrane as a helical span at residues 107–130 (LGIVTATELTFSLLFLALLVWALS). Residues 131–198 (NYLYLSYHVH…VGLTSESSIK (68 aa)) lie on the Extracellular side of the membrane. The region spanning 165–284 (GYVGHYCWAF…HLYGLYIVFY (120 aa)) is the Ferric oxidoreductase domain. A helical transmembrane segment spans residues 199–222 (YHIWLGHVSNFCFLVHTVVFLIYW). His200 and His214 together coordinate heme. Topologically, residues 223–272 (AMVNKLMETFAWNATYVPNLAGTIAMVIGIAIWVTSLPSFRRKKFEIFFY) are cytoplasmic. Residues 273–297 (THHLYGLYIVFYAIHVGDSWFCMIL) form a helical membrane-spanning segment. Heme contacts are provided by His274 and His287. The Extracellular segment spans residues 298-319 (PNIFLFFIDRYLRFLQSTKRSR). One can recognise an FAD-binding FR-type domain in the interval 313-416 (QSTKRSRLVS…EGPYGPNSFD (104 aa)). Residues 320–340 (LVSAKILPSDNLELTFAKTSG) form a helical membrane-spanning segment. Residues 341–533 (LHYTPTSILF…PISPVLGPNN (193 aa)) are Cytoplasmic-facing. An FAD-binding site is contributed by 362 to 365 (HPFT). 408 to 411 (GPYG) is a binding site for NAD(+). Residues 534-556 (FLWLGVVILSSFVMFLLLIGIVT) traverse the membrane as a helical segment. Over 557-576 (RYYIYPVDHNTGSIYNFTYR) the chain is Extracellular. The chain crosses the membrane as a helical span at residues 577 to 598 (VLWVMFLGCVCIFISSSIIFLW). The Cytoplasmic segment spans residues 599-707 (RKKENKEGDK…LHFEAISFNW (109 aa)). The segment at 608–630 (KDSKKQVQSVEFQTPTSSPGSWF) is disordered. Over residues 613 to 627 (QVQSVEFQTPTSSPG) the composition is skewed to polar residues.

It belongs to the ferric reductase (FRE) family. It depends on FAD as a cofactor. Expressed at low levels in roots, shoots, pedicels and inflorescence stems, flowers, sepals, stigmas and anther filaments.

It is found in the cell membrane. It catalyses the reaction 2 a Fe(II)-siderophore + NAD(+) + H(+) = 2 a Fe(III)-siderophore + NADH. Its function is as follows. Ferric chelate reductase probably involved in iron reduction in shoots. May participate in the transport of electrons to a Fe(3+) ion via FAD and heme intermediates. May act in iron metabolism in reproductive organs. May function as root surface cupric chelate reductase and participate in the reduction of Cu(2+), for Cu(+) acquisition via Cu(+) transporters in response to copper deficiency. The sequence is that of Ferric reduction oxidase 5 (FRO5) from Arabidopsis thaliana (Mouse-ear cress).